A 629-amino-acid polypeptide reads, in one-letter code: Iron multicopper oxidase fer1 (629 aa).

Residues methionine 1–alanine 29 form the signal peptide. Plastocyanin-like domains are found at residues valine 44–aspartate 164 and aspartate 175–tyrosine 338. N-linked (GlcNAc...) asparagine glycosylation is found at asparagine 58 and asparagine 69. Cu cation contacts are provided by histidine 91 and histidine 93. Asparagine 98 carries N-linked (GlcNAc...) asparagine glycosylation. Residues histidine 144 and histidine 146 each contribute to the Cu cation site. N-linked (GlcNAc...) asparagine glycans are attached at residues asparagine 188, asparagine 222, asparagine 236, asparagine 253, asparagine 303, asparagine 331, and asparagine 398. Residues tyrosine 401–aspartate 537 enclose the Plastocyanin-like 3 domain. Cu cation contacts are provided by histidine 452, histidine 455, and histidine 457. A glycan (N-linked (GlcNAc...) asparagine) is linked at asparagine 482. Residues histidine 517, cysteine 518, histidine 519, and histidine 523 each contribute to the Cu cation site. N-linked (GlcNAc...) asparagine glycosylation is present at asparagine 569. A helical membrane pass occupies residues alanine 592 to valine 612.

This sequence belongs to the multicopper oxidase family. It depends on Cu cation as a cofactor.

It localises to the cell membrane. Its function is as follows. Iron transport multicopper oxidase, which is required for Fe(2+) high affinity uptake. May be required to oxidize Fe(2+) and release it from the transporter. Essential component of copper-dependent iron transport. This is Iron multicopper oxidase fer1 from Mycosarcoma maydis (Corn smut fungus).